Here is a 250-residue protein sequence, read N- to C-terminus: 5'-nucleotidase SurE (250 aa).

A divalent metal cation-binding residues include Asp-9, Asp-10, Ser-40, and Asn-92.

It belongs to the SurE nucleotidase family. A divalent metal cation serves as cofactor.

The protein resides in the cytoplasm. It catalyses the reaction a ribonucleoside 5'-phosphate + H2O = a ribonucleoside + phosphate. In terms of biological role, nucleotidase that shows phosphatase activity on nucleoside 5'-monophosphates. The polypeptide is 5'-nucleotidase SurE (Idiomarina loihiensis (strain ATCC BAA-735 / DSM 15497 / L2-TR)).